A 372-amino-acid chain; its full sequence is tRNA-specific 2-thiouridylase MnmA (372 aa).

ATP is bound by residues 16-23 (GMSGGVDS) and methionine 42. The interval 102–104 (NPD) is interaction with target base in tRNA. Residue cysteine 107 is the Nucleophile of the active site. Cysteine 107 and cysteine 205 are disulfide-bonded. Glycine 132 lines the ATP pocket. An interaction with tRNA region spans residues 155–157 (KDQ). The Cysteine persulfide intermediate role is filled by cysteine 205. The interaction with tRNA stretch occupies residues 317–318 (RY).

It belongs to the MnmA/TRMU family.

The protein localises to the cytoplasm. The enzyme catalyses S-sulfanyl-L-cysteinyl-[protein] + uridine(34) in tRNA + AH2 + ATP = 2-thiouridine(34) in tRNA + L-cysteinyl-[protein] + A + AMP + diphosphate + H(+). In terms of biological role, catalyzes the 2-thiolation of uridine at the wobble position (U34) of tRNA, leading to the formation of s(2)U34. This Shewanella putrefaciens (strain CN-32 / ATCC BAA-453) protein is tRNA-specific 2-thiouridylase MnmA.